The following is a 166-amino-acid chain: MVRKVKRRVSCLPKATYYKPREIPLCDLEIINLSVEELEAIRLCDLLQIAQDEAADQMGISRKTFWNDLQKARQKVADALVNGKAIQISGGDYVNSGVCKVEFLCQKCNHLWETPCNEKRPENCPKCGSESIYRKGGDGRGKRHTERGFCCPKHGDRAVGDQEESV.

It belongs to the UPF0251 family.

The polypeptide is UPF0251 protein UNCMA_27150 (Methanocella arvoryzae (strain DSM 22066 / NBRC 105507 / MRE50)).